The sequence spans 161 residues: MNPRRKKRLTLAVALVFGLGATIGLMLYALSQNMDLFYTPTELVQGKPDGTKPEVGQRLRIGGMVVEGSVKRDPQSLIVTFEVADVGPAVTITYNGILPDLFREGQGIVAQGVLVNSTTIEAHEVLAKHDEEYMPPEIAEAMKKTHEPLQYSDEQKQGRVQ.

The Cytoplasmic portion of the chain corresponds to 1–8; that stretch reads MNPRRKKR. The chain crosses the membrane as a helical; Signal-anchor for type II membrane protein span at residues 9–29; the sequence is LTLAVALVFGLGATIGLMLYA. Topologically, residues 30–161 are periplasmic; it reads LSQNMDLFYT…SDEQKQGRVQ (132 aa). Positions 129 and 133 each coordinate heme.

It belongs to the CcmE/CycJ family.

The protein localises to the cell inner membrane. Heme chaperone required for the biogenesis of c-type cytochromes. Transiently binds heme delivered by CcmC and transfers the heme to apo-cytochromes in a process facilitated by CcmF and CcmH. This chain is Cytochrome c-type biogenesis protein CcmE, found in Photobacterium profundum (strain SS9).